Here is a 329-residue protein sequence, read N- to C-terminus: L-threonine dehydratase catabolic TdcB (329 aa).

Residue 53–54 coordinates AMP; that stretch reads RT. Lys58 bears the N6-(pyridoxal phosphate)lysine mark. Residues Gln88, 119-120, and Asn314 contribute to the AMP site; that span reads DY.

The protein belongs to the serine/threonine dehydratase family. In the native structure, TdcB is in a dimeric form, whereas in the TdcB-AMP complex, it exists in a tetrameric form (dimer of dimers). The cofactor is pyridoxal 5'-phosphate.

It catalyses the reaction L-threonine = 2-oxobutanoate + NH4(+). The enzyme catalyses L-serine = pyruvate + NH4(+). It functions in the pathway amino-acid degradation; L-threonine degradation via propanoate pathway; propanoate from L-threonine: step 1/4. Each protein molecule can bind up to four molecules of AMP, which act as an allosteric activator to the enzyme. In terms of biological role, catalyzes the anaerobic formation of alpha-ketobutyrate and ammonia from threonine in a two-step reaction. The first step involved a dehydration of threonine and a production of enamine intermediates (aminocrotonate), which tautomerizes to its imine form (iminobutyrate). Both intermediates are unstable and short-lived. The second step is the nonenzymatic hydrolysis of the enamine/imine intermediates to form 2-ketobutyrate and free ammonia. In the low water environment of the cell, the second step is accelerated by RidA. TdcB also dehydrates serine to yield pyruvate via analogous enamine/imine intermediates. The polypeptide is L-threonine dehydratase catabolic TdcB (tdcB) (Escherichia coli O157:H7).